The sequence spans 206 residues: N-(5'-phosphoribosyl)anthranilate isomerase (206 aa).

This sequence belongs to the TrpF family.

It carries out the reaction N-(5-phospho-beta-D-ribosyl)anthranilate = 1-(2-carboxyphenylamino)-1-deoxy-D-ribulose 5-phosphate. The protein operates within amino-acid biosynthesis; L-tryptophan biosynthesis; L-tryptophan from chorismate: step 3/5. The polypeptide is N-(5'-phosphoribosyl)anthranilate isomerase (Pseudomonas syringae pv. syringae (strain B728a)).